Here is a 452-residue protein sequence, read N- to C-terminus: 1,3-beta-glucanosyltransferase gel1 (452 aa).

Positions 1–19 (MKASAVTAALAVGASTVLA) are cleaved as a signal peptide. A disulfide bond links Cys-71 and Cys-100. Residues Tyr-89, Asn-159, Glu-160, Asp-201, and Arg-206 each coordinate (1,3-beta-D-glucosyl)n. Glu-160 (proton donor) is an active-site residue. Intrachain disulfides connect Cys-215/Cys-345 and Cys-233/Cys-264. A glycan (N-linked (GlcNAc...) asparagine) is linked at Asn-249. Glu-261 (nucleophile) is an active-site residue. A (1,3-beta-D-glucosyl)n-binding site is contributed by Tyr-292. Over residues 325–340 (EKTSNPSGDGNYNKTG) the composition is skewed to polar residues. The disordered stretch occupies residues 325 to 419 (EKTSNPSGDG…SGTSTSSKGA (95 aa)). Asn-337 carries an N-linked (GlcNAc...) asparagine glycan. Over residues 393–419 (STATAEPGSGSATGSSSSGTSTSSKGA) the composition is skewed to low complexity. Ala-419 carries the GPI-like-anchor amidated alanine lipid modification. Residues 420 to 452 (AAGLTVPSLTMAPVVVGAVTLLSTVFGAGLVLL) constitute a propeptide, removed in mature form.

Belongs to the glycosyl hydrolase 72 family. Post-translationally, the GPI-like anchor contains a phosphoceramide lipid group.

Its subcellular location is the cell membrane. Functionally, splits internally a 1,3-beta-glucan molecule and transfers the newly generated reducing end (the donor) to the non-reducing end of another 1,3-beta-glucan molecule (the acceptor) forming a 1,3-beta linkage, resulting in the elongation of 1,3-beta-glucan chains in the cell wall. Involved in cell wall morphogenesis. The polypeptide is 1,3-beta-glucanosyltransferase gel1 (gel1) (Aspergillus fumigatus (strain ATCC MYA-4609 / CBS 101355 / FGSC A1100 / Af293) (Neosartorya fumigata)).